The primary structure comprises 178 residues: Ribosome maturation factor RimP (178 aa).

It belongs to the RimP family.

It localises to the cytoplasm. Functionally, required for maturation of 30S ribosomal subunits. The chain is Ribosome maturation factor RimP from Streptococcus pyogenes serotype M5 (strain Manfredo).